The chain runs to 354 residues: Protein C42 (354 aa).

Positions 349–352 match the Nuclear localization signal motif; that stretch reads KRKK.

Belongs to the baculoviridae C42 protein family.

It is found in the host nucleus. The chain is Protein C42 from Orgyia pseudotsugata (Douglas-fir tussock moth).